The primary structure comprises 320 residues: Flavonol 4'-sulfotransferase (320 aa).

69–74 contacts 3'-phosphoadenylyl sulfate; the sequence is KSGTTW. H129 (proton acceptor) is an active-site residue. Residues R151, S159, Y217, and 285-287 each bind 3'-phosphoadenylyl sulfate; that span reads RKA.

Belongs to the sulfotransferase 1 family. In terms of tissue distribution, highest in shoot tips and lowest in mature leaves and roots.

It localises to the cytoplasm. The catalysed reaction is quercetin 3-sulfate + 3'-phosphoadenylyl sulfate = quercetin 3,4'-bissulfate + adenosine 3',5'-bisphosphate + H(+). Its activity is regulated as follows. No requirement for divalent cations and insensitive to p-chloromercuribenzoate, iodoacetate, or iodoacetamide. In terms of biological role, sulfotransferase that utilizes 3'-phospho-5'-adenylyl sulfate (PAPS) as sulfonate donor to catalyze the sulfate conjugation of quercetin 3-sulfate &gt; kaempferol 3-sulfate &gt; isorhamnetin 3-sulfate &gt; patuletin 3-sulfate, but not tamarixetin 3-sulfate. O-sulfation of position 4' of flavonol. May play a role in auxin transport. In Flaveria chlorifolia (Clasping yellowtops), this protein is Flavonol 4'-sulfotransferase.